The following is a 393-amino-acid chain: tRNA(Met) cytidine acetate ligase (393 aa).

The ATP site is built by Gly-81, Asn-142, and Arg-167.

It belongs to the TmcAL family.

The protein resides in the cytoplasm. The enzyme catalyses cytidine(34) in elongator tRNA(Met) + acetate + ATP = N(4)-acetylcytidine(34) in elongator tRNA(Met) + AMP + diphosphate. Functionally, catalyzes the formation of N(4)-acetylcytidine (ac(4)C) at the wobble position of elongator tRNA(Met), using acetate and ATP as substrates. First activates an acetate ion to form acetyladenylate (Ac-AMP) and then transfers the acetyl group to tRNA to form ac(4)C34. The protein is tRNA(Met) cytidine acetate ligase of Bacillus cytotoxicus (strain DSM 22905 / CIP 110041 / 391-98 / NVH 391-98).